Here is a 569-residue protein sequence, read N- to C-terminus: Probable protein phosphatase 2C BIPP2C1 (569 aa).

Disordered regions lie at residues 120–214 (EVSP…KVTG) and 251–279 (SLDD…GSSI). Basic and acidic residues predominate over residues 179 to 188 (ESERGSDADG). The 236-residue stretch at 329–564 (AAMLPHPSKV…DDVTVVVSVV (236 aa)) folds into the PPM-type phosphatase domain. Mn(2+) contacts are provided by Asp358, Gly359, Asp488, and Asp555.

The protein belongs to the PP2C family. Requires Mg(2+) as cofactor. Mn(2+) serves as cofactor.

It carries out the reaction O-phospho-L-seryl-[protein] + H2O = L-seryl-[protein] + phosphate. It catalyses the reaction O-phospho-L-threonyl-[protein] + H2O = L-threonyl-[protein] + phosphate. Its function is as follows. May play a role in responses to biotic and abiotic stresses. The sequence is that of Probable protein phosphatase 2C BIPP2C1 (BIPP2C1) from Oryza sativa subsp. japonica (Rice).